The sequence spans 300 residues: Alpha-tubulin N-acetyltransferase 1 (300 aa).

An N-acetyltransferase domain is found at 1-190 (MEFPFDVDAL…NNFVIFEGFF (190 aa)). K56 carries the post-translational modification N6-acetyllysine; by autocatalysis. 124-137 (FYIHESLQRHGHGR) lines the acetyl-CoA pocket. Position 146 is an N6-acetyllysine; by autocatalysis (K146). 160–169 (SQKLLKFLNK) provides a ligand contact to acetyl-CoA. An N6-acetyllysine; by autocatalysis mark is found at K210 and K221. Disordered regions lie at residues 229–263 (PLNRAPRRATPPAHPPPRSSSLGNSPERGPLRPFV) and 280–300 (TARLLLATDPGGSPAQRRRTR). Residues S249 and S253 each carry the phosphoserine modification. R282 bears the Asymmetric dimethylarginine mark. The residue at position 292 (S292) is a Phosphoserine. R300 carries the omega-N-methylarginine modification.

The protein belongs to the acetyltransferase ATAT1 family. Component of the BBSome complex. Interacts with AP2 alpha-adaptins, including AP2A2, but not with AP1 gamma-adaptin (AP1G1/AP1G2); this interaction is required for efficient alpha-tubulin acetylation, hence clathrin-coated pits are sites of microtubule acetylation. Autoacetylation strongly increases tubulin acetylation.

The protein resides in the cytoplasm. It localises to the membrane. Its subcellular location is the clathrin-coated pit. The protein localises to the cell junction. It is found in the focal adhesion. The protein resides in the cell projection. It localises to the axon. Its subcellular location is the cytoskeleton. The protein localises to the spindle. The catalysed reaction is L-lysyl-[alpha-tubulin] + acetyl-CoA = N(6)-acetyl-L-lysyl-[alpha-tubulin] + CoA + H(+). Its function is as follows. Specifically acetylates 'Lys-40' in alpha-tubulin on the lumenal side of microtubules. Promotes microtubule destabilization and accelerates microtubule dynamics; this activity may be independent of acetylation activity. Acetylates alpha-tubulin with a slow enzymatic rate, due to a catalytic site that is not optimized for acetyl transfer. Enters the microtubule through each end and diffuses quickly throughout the lumen of microtubules. Acetylates only long/old microtubules because of its slow acetylation rate since it does not have time to act on dynamically unstable microtubules before the enzyme is released. Required for normal sperm flagellar function. Promotes directional cell locomotion and chemotaxis, through AP2A2-dependent acetylation of alpha-tubulin at clathrin-coated pits that are concentrated at the leading edge of migrating cells. May facilitate primary cilium assembly. In Sus scrofa (Pig), this protein is Alpha-tubulin N-acetyltransferase 1.